The following is a 384-amino-acid chain: MAAGAGPGSAATMYVCGITPYDATHLGHAATYLAFDLIYRQWLDLGHDVHYVQNVTDVDDPLLERAARDGIDWRALAEREVSLFREDMAALRILAPRDYVGATEAIADVVELVEKMLASGAAYVVDGEFPDIYYRADATLQFGYESGYDRETMLRLFAERGGDPQRPGKTDALDALLWRAARPGEPSWPSPFGNGRPGWHVECAAIALSRIGSGLDIQGGGSDLIFPHHEFTAAHAECVRGERRFARHYVHAGMIGWDGHKMSKSRGNLVLVSQLRGRGVEPAAIRLGLLAGHFRGDRYWSDQVLDEATARLRRWRTATALPAGPDATDVIARVRQYLADDLNTPKALAALDGWTTDALDYGGHDTAAPRLVATAVDALLGVAL.

Position 16 (Cys16) interacts with Zn(2+). Residues 16–19 (CGIT), Thr31, and 54–56 (NVT) contribute to the L-cysteinyl-5'-AMP site. The short motif at 18–28 (ITPYDATHLGH) is the 'HIGH' region element. Residues 159 to 164 (ERGGDP) carry the 'ERGGDP' region motif. Position 199 (Trp199) interacts with L-cysteinyl-5'-AMP. Cys203 provides a ligand contact to Zn(2+). Residue 221–223 (GSD) participates in L-cysteinyl-5'-AMP binding. His228 contacts Zn(2+). Ile255 contacts L-cysteinyl-5'-AMP. A 'KMSKS' region motif is present at residues 261-265 (KMSKS).

It belongs to the class-I aminoacyl-tRNA synthetase family. MshC subfamily. In terms of assembly, monomer. Requires Zn(2+) as cofactor.

It catalyses the reaction 1D-myo-inositol 2-amino-2-deoxy-alpha-D-glucopyranoside + L-cysteine + ATP = 1D-myo-inositol 2-(L-cysteinylamino)-2-deoxy-alpha-D-glucopyranoside + AMP + diphosphate + H(+). In terms of biological role, catalyzes the ATP-dependent condensation of GlcN-Ins and L-cysteine to form L-Cys-GlcN-Ins. The polypeptide is L-cysteine:1D-myo-inositol 2-amino-2-deoxy-alpha-D-glucopyranoside ligase (Mycobacterium avium (strain 104)).